Consider the following 478-residue polypeptide: 3-isopropylmalate dehydratase large subunit (478 aa).

[4Fe-4S] cluster is bound by residues C347, C407, and C410.

Belongs to the aconitase/IPM isomerase family. LeuC type 1 subfamily. As to quaternary structure, heterodimer of LeuC and LeuD. It depends on [4Fe-4S] cluster as a cofactor.

It catalyses the reaction (2R,3S)-3-isopropylmalate = (2S)-2-isopropylmalate. It participates in amino-acid biosynthesis; L-leucine biosynthesis; L-leucine from 3-methyl-2-oxobutanoate: step 2/4. In terms of biological role, catalyzes the isomerization between 2-isopropylmalate and 3-isopropylmalate, via the formation of 2-isopropylmaleate. This chain is 3-isopropylmalate dehydratase large subunit, found in Prochlorococcus marinus (strain MIT 9303).